The following is a 404-amino-acid chain: Proteasomal ubiquitin receptor ADRM1-B (404 aa).

In terms of domain architecture, Pru spans 17-130; it reads SSSKYLVEFR…RKVNEYLNNP (114 aa). Disordered stretches follow at residues 128–149, 195–258, and 376–404; these read NNPP…LSAL, GSGG…TSPT, and FAKA…MSLD. A compositionally biased stretch (low complexity) spans 195–247; it reads GSGGPTTSSSSSSSRSQSAAVTPSSTTSSTRTTSAPVAPAAAPATTPSPAVSS. Positions 248 to 258 are enriched in polar residues; the sequence is NDGASAATSPT. One can recognise a DEUBAD domain in the interval 278-390; sequence TGEGGQQVDL…QSTSSQKERE (113 aa). The segment covering 386 to 395 has biased composition (basic and acidic residues); sequence QKERESSEKK.

The protein belongs to the ADRM1 family. Component of the 19S proteasome regulatory particle complex. The 26S proteasome consists of a 20S core particle (CP) and two 19S regulatory subunits (RP).

The protein localises to the cytoplasm. Its subcellular location is the nucleus. Functionally, component of the 26S proteasome, a multiprotein complex involved in the ATP-dependent degradation of ubiquitinated proteins. This complex plays a key role in the maintenance of protein homeostasis by removing misfolded or damaged proteins, which could impair cellular functions, and by removing proteins whose functions are no longer required. Therefore, the proteasome participates in numerous cellular processes, including cell cycle progression, apoptosis, or DNA damage repair. Within the complex, functions as a proteasomal ubiquitin receptor. The protein is Proteasomal ubiquitin receptor ADRM1-B (adrm1-b) of Xenopus laevis (African clawed frog).